The chain runs to 222 residues: MAASVRKARSLLGLTATLAPGSRGYRAPPPPRREPGPWWPDPEDLLTHRWQLGPRYAAKQFARYGAASGVAPGSLWPSPEQLRELEAEEREWYPSLATMQESLRVKHLAEEQKRREREQHIAECMAKMPQMIVNWQQQQRERWEKAQADKERRARLQAEAQELLGYQVNPKSARFQELLQDLEKKERKRLKEEKQRQKQEARAAALAAAAAQDPAASGAPSS.

2 disordered regions span residues 14–40 (LTATLAPGSRGYRAPPPPRREPGPWWP) and 188–222 (KRLKEEKQRQKQEARAAALAAAAAQDPAASGAPSS). Residues 144 to 213 (EKAQADKERR…AALAAAAAQD (70 aa)) are a coiled coil. The Nuclear localization signal signature appears at 184–200 (KKERKRLKEEKQRQKQE). The span at 188–201 (KRLKEEKQRQKQEA) shows a compositional bias: basic and acidic residues. Residues 202-216 (RAAALAAAAAQDPAA) are compositionally biased toward low complexity.

The protein belongs to the mitochondrion-specific ribosomal protein mL64 family. In terms of assembly, component of the mitochondrial ribosome large subunit (39S) which comprises a 16S rRNA and about 50 distinct proteins. Interacts with GADD45A, GADD45B and GADD45G. Interacts with NR4A1 via the NR4A1 AB domain. Interacts with ATAD3A and ATAD3B.

It is found in the mitochondrion. Its subcellular location is the nucleus. Its function is as follows. Acts as a negative regulator of G1 to S cell cycle phase progression by inhibiting cyclin-dependent kinases. Inhibitory effects are additive with GADD45 proteins but also occur in the absence of GADD45 proteins. Acts as a repressor of the orphan nuclear receptor NR4A1 by inhibiting AB domain-mediated transcriptional activity. May be involved in the hormone-mediated regulation of NR4A1 transcriptional activity. May play a role in mitochondrial protein synthesis. The chain is Large ribosomal subunit protein mL64 (GADD45GIP1) from Chlorocebus aethiops (Green monkey).